A 156-amino-acid chain; its full sequence is Cell division protein SepF (156 aa).

Over residues 23-36 (SYEKEQTDMKKQQD) the composition is skewed to basic and acidic residues. The tract at residues 23–50 (SYEKEQTDMKKQQDPPEQQDVTFPKAQP) is disordered.

The protein belongs to the SepF family. Homodimer. Interacts with FtsZ.

The protein localises to the cytoplasm. Functionally, cell division protein that is part of the divisome complex and is recruited early to the Z-ring. Probably stimulates Z-ring formation, perhaps through the cross-linking of FtsZ protofilaments. Its function overlaps with FtsA. This Bacillus thuringiensis (strain Al Hakam) protein is Cell division protein SepF.